A 511-amino-acid chain; its full sequence is ESX-1 secretion system protein EccD1 (511 aa).

S2 bears the N-acetylserine mark. The Cytoplasmic portion of the chain corresponds to 2–143 (SAPAVAAGPT…PEFDRTALNR (142 aa)). A helical membrane pass occupies residues 144–164 (FVGAAIPLLTAPVIGMAMRAW). The Periplasmic segment spans residues 165–170 (WETGRS). A helical transmembrane segment spans residues 171–191 (LWWPLAIGILGIAVLVGSFVA). Residues 192–202 (NRFYQSGHLAE) are Cytoplasmic-facing. Residues 203-223 (CLLVTTYLLIATAAALAVPLP) traverse the membrane as a helical segment. The Periplasmic portion of the chain corresponds to 224-227 (RGVN). The chain crosses the membrane as a helical span at residues 228–248 (SLGAPQVAGAATAVLFLTLMT). Residues 249 to 257 (RGGPRKRHE) lie on the Cytoplasmic side of the membrane. A helical transmembrane segment spans residues 258-278 (LASFAVITAIAVIAAAAAFGY). The Periplasmic segment spans residues 279–285 (GYQDWVP). Residues 286 to 306 (AGGIAFGLFIVTNAAKLTVAV) traverse the membrane as a helical segment. The Cytoplasmic portion of the chain corresponds to 307–367 (ARIALPPIPV…TERSKLAKQL (61 aa)). 2 helical membrane-spanning segments follow: residues 368-388 (LIGY…AVVV) and 389-409 (RGHF…VCGF). Residues 410 to 420 (RSRLYAERWCA) are Cytoplasmic-facing. A helical transmembrane segment spans residues 421-441 (WALLAATVAIPTGLTAKLIIW). Topologically, residues 442–444 (YPH) are periplasmic. Residues 445–465 (YAWLLLSVYLTVALVALVVVG) form a helical membrane-spanning segment. Residues 466 to 482 (SMAHVRRVSPVVKRTLE) are Cytoplasmic-facing. The chain crosses the membrane as a helical span at residues 483-503 (LIDGAMIAAIIPMLLWITGVY). At 504–511 (DTVRNIRF) the chain is on the periplasmic side.

This sequence belongs to the EccD/Snm4 family. As to quaternary structure, possibly a homodimer. Part of the ESX-1 / type VII secretion system (T7SS), which is composed of cytosolic and membrane components. The ESX-1 membrane complex is composed of EccB1, EccCa1, EccCb1, EccD1 and EccE1.

It localises to the cell inner membrane. Its function is as follows. Part of the ESX-1 specialized secretion system, which delivers several virulence factors to host cells during infection, including the key virulence factors EsxA (ESAT-6) and EsxB (CFP-10). The sequence is that of ESX-1 secretion system protein EccD1 from Mycobacterium tuberculosis (strain ATCC 25618 / H37Rv).